We begin with the raw amino-acid sequence, 258 residues long: UPF0246 protein YaaA (258 aa).

Belongs to the UPF0246 family.

In Escherichia coli O6:K15:H31 (strain 536 / UPEC), this protein is UPF0246 protein YaaA.